We begin with the raw amino-acid sequence, 78 residues long: Large ribosomal subunit protein bL28 (78 aa).

The tract at residues 1-21 (MSRVCQVTGKRPVSGNNRSHA) is disordered.

It belongs to the bacterial ribosomal protein bL28 family.

In Serratia proteamaculans (strain 568), this protein is Large ribosomal subunit protein bL28.